A 328-amino-acid polypeptide reads, in one-letter code: Tyrosine--tRNA ligase (328 aa).

Tyrosine 33 lines the L-tyrosine pocket. The 'HIGH' region signature appears at 38–46; the sequence is PSGVLHIGH. Tyrosine 154, glutamine 158, aspartate 161, and glutamine 176 together coordinate L-tyrosine. A disordered region spans residues 193–227; the sequence is EPPTSLHTPLIADLGTGRGKMSSSEGVTISMEDSR. The 'KMSKS' region motif lies at 212-216; the sequence is KMSSS. Position 215 (serine 215) interacts with ATP.

It belongs to the class-I aminoacyl-tRNA synthetase family. TyrS type 3 subfamily. Homodimer.

The protein localises to the cytoplasm. The enzyme catalyses tRNA(Tyr) + L-tyrosine + ATP = L-tyrosyl-tRNA(Tyr) + AMP + diphosphate + H(+). Its function is as follows. Catalyzes the attachment of tyrosine to tRNA(Tyr) in a two-step reaction: tyrosine is first activated by ATP to form Tyr-AMP and then transferred to the acceptor end of tRNA(Tyr). This is Tyrosine--tRNA ligase from Halorubrum lacusprofundi (strain ATCC 49239 / DSM 5036 / JCM 8891 / ACAM 34).